A 436-amino-acid chain; its full sequence is T-box transcription factor TBX6 (436 aa).

Residues 100–273 (LWKEFSAVGT…ANPFAKGFRE (174 aa)) constitute a DNA-binding region (T-box). Residues 274-284 (NGRNCKRERDA) are compositionally biased toward basic and acidic residues. Disordered stretches follow at residues 274-344 (NGRN…CGGP) and 360-383 (PSHL…APYS). Positions 332–344 (EAASASAPPCGGP) are enriched in low complexity.

The protein resides in the nucleus. T-box transcription factor that plays an essential role in the determination of the fate of axial stem cells: neural vs mesodermal. Acts in part by down-regulating, a specific enhancer (N1) of SOX2, to inhibit neural development. Seems to play also an essential role in left/right axis determination and acts through effects on Notch signaling around the node as well as through an effect on the morphology and motility of the nodal cilia. This is T-box transcription factor TBX6 (Tbx6) from Mus musculus (Mouse).